A 471-amino-acid polypeptide reads, in one-letter code: T-box transcription factor T (471 aa).

The T-box DNA-binding region spans 24 to 196 (LWTKFCSLTN…HNPFAKAFLD (173 aa)).

Developing notochord.

Its subcellular location is the nucleus. In terms of biological role, involved in the transcriptional regulation of genes required for mesoderm differentiation. The sequence is that of T-box transcription factor T from Halocynthia roretzi (Sea squirt).